The following is a 228-amino-acid chain: 7-cyano-7-deazaguanine synthase (228 aa).

7-17 contributes to the ATP binding site; it reads LSGGMDSLVTT. Zn(2+) is bound by residues Cys-187, Cys-195, Cys-198, and Cys-201.

This sequence belongs to the QueC family. Zn(2+) serves as cofactor.

It carries out the reaction 7-carboxy-7-deazaguanine + NH4(+) + ATP = 7-cyano-7-deazaguanine + ADP + phosphate + H2O + H(+). The protein operates within purine metabolism; 7-cyano-7-deazaguanine biosynthesis. Functionally, catalyzes the ATP-dependent conversion of 7-carboxy-7-deazaguanine (CDG) to 7-cyano-7-deazaguanine (preQ(0)). In Chlorobium chlorochromatii (strain CaD3), this protein is 7-cyano-7-deazaguanine synthase.